Consider the following 308-residue polypeptide: ADP-L-glycero-D-manno-heptose-6-epimerase (308 aa).

Residues 10 to 11 (MI), 31 to 32 (DN), K38, K53, 75 to 79 (EGACS), and N92 contribute to the NADP(+) site. The active-site Proton acceptor is Y140. K144 contacts NADP(+). A substrate-binding site is contributed by N169. The NADP(+) site is built by V170 and K178. K178 acts as the Proton acceptor in catalysis. Residues S180, H187, 201–204 (FEGS), R209, and Y272 each bind substrate.

It belongs to the NAD(P)-dependent epimerase/dehydratase family. HldD subfamily. In terms of assembly, homopentamer. NADP(+) serves as cofactor.

It catalyses the reaction ADP-D-glycero-beta-D-manno-heptose = ADP-L-glycero-beta-D-manno-heptose. The protein operates within nucleotide-sugar biosynthesis; ADP-L-glycero-beta-D-manno-heptose biosynthesis; ADP-L-glycero-beta-D-manno-heptose from D-glycero-beta-D-manno-heptose 7-phosphate: step 4/4. Its function is as follows. Catalyzes the interconversion between ADP-D-glycero-beta-D-manno-heptose and ADP-L-glycero-beta-D-manno-heptose via an epimerization at carbon 6 of the heptose. This is ADP-L-glycero-D-manno-heptose-6-epimerase from Actinobacillus pleuropneumoniae serotype 5b (strain L20).